The primary structure comprises 443 residues: Ribulose bisphosphate carboxylase large chain (443 aa).

The substrate site is built by asparagine 89 and threonine 139. The Proton acceptor role is filled by lysine 141. Lysine 143 provides a ligand contact to substrate. Positions 167, 169, and 170 each coordinate Mg(2+). Residue lysine 167 is modified to N6-carboxylysine. Residue histidine 260 is the Proton acceptor of the active site. Positions 261, 293, and 345 each coordinate substrate.

This sequence belongs to the RuBisCO large chain family. Type I subfamily. As to quaternary structure, heterohexadecamer of 8 large chains and 8 small chains; disulfide-linked. The disulfide link is formed within the large subunit homodimers. Mg(2+) is required as a cofactor. In terms of processing, the disulfide bond which can form in the large chain dimeric partners within the hexadecamer appears to be associated with oxidative stress and protein turnover.

It is found in the plastid. The protein localises to the chloroplast. It catalyses the reaction 2 (2R)-3-phosphoglycerate + 2 H(+) = D-ribulose 1,5-bisphosphate + CO2 + H2O. It carries out the reaction D-ribulose 1,5-bisphosphate + O2 = 2-phosphoglycolate + (2R)-3-phosphoglycerate + 2 H(+). RuBisCO catalyzes two reactions: the carboxylation of D-ribulose 1,5-bisphosphate, the primary event in carbon dioxide fixation, as well as the oxidative fragmentation of the pentose substrate in the photorespiration process. Both reactions occur simultaneously and in competition at the same active site. The chain is Ribulose bisphosphate carboxylase large chain from Villarsia calthifolia (Marsh flower).